The primary structure comprises 230 residues: Proteasome subunit alpha (230 aa).

The protein belongs to the peptidase T1A family. The 20S proteasome core is composed of 14 alpha and 14 beta subunits that assemble into four stacked heptameric rings, resulting in a barrel-shaped structure. The two inner rings, each composed of seven catalytic beta subunits, are sandwiched by two outer rings, each composed of seven alpha subunits. The catalytic chamber with the active sites is on the inside of the barrel. Has a gated structure, the ends of the cylinder being occluded by the N-termini of the alpha-subunits. Is capped by the proteasome-associated ATPase, ARC.

The protein resides in the cytoplasm. Its pathway is protein degradation; proteasomal Pup-dependent pathway. The formation of the proteasomal ATPase ARC-20S proteasome complex, likely via the docking of the C-termini of ARC into the intersubunit pockets in the alpha-rings, may trigger opening of the gate for substrate entry. Interconversion between the open-gate and close-gate conformations leads to a dynamic regulation of the 20S proteasome proteolysis activity. Its function is as follows. Component of the proteasome core, a large protease complex with broad specificity involved in protein degradation. The protein is Proteasome subunit alpha of Thermomonospora curvata (strain ATCC 19995 / DSM 43183 / JCM 3096 / KCTC 9072 / NBRC 15933 / NCIMB 10081 / Henssen B9).